The primary structure comprises 349 residues: Glycerol-3-phosphate dehydrogenase [NAD(P)+] (349 aa).

The NADPH site is built by Trp-16, Arg-36, and Lys-110. Residues Lys-110, Gly-138, and Thr-140 each contribute to the sn-glycerol 3-phosphate site. Residue Ala-142 participates in NADPH binding. Positions 193, 246, 256, 257, and 258 each coordinate sn-glycerol 3-phosphate. Lys-193 acts as the Proton acceptor in catalysis. Residue Arg-257 participates in NADPH binding. 2 residues coordinate NADPH: Val-281 and Glu-283.

Belongs to the NAD-dependent glycerol-3-phosphate dehydrogenase family.

The protein resides in the cytoplasm. The enzyme catalyses sn-glycerol 3-phosphate + NAD(+) = dihydroxyacetone phosphate + NADH + H(+). It catalyses the reaction sn-glycerol 3-phosphate + NADP(+) = dihydroxyacetone phosphate + NADPH + H(+). It functions in the pathway membrane lipid metabolism; glycerophospholipid metabolism. Its function is as follows. Catalyzes the reduction of the glycolytic intermediate dihydroxyacetone phosphate (DHAP) to sn-glycerol 3-phosphate (G3P), the key precursor for phospholipid synthesis. This chain is Glycerol-3-phosphate dehydrogenase [NAD(P)+], found in Rhodospirillum rubrum (strain ATCC 11170 / ATH 1.1.1 / DSM 467 / LMG 4362 / NCIMB 8255 / S1).